Here is a 776-residue protein sequence, read N- to C-terminus: 5-methyltetrahydropteroyltriglutamate--homocysteine methyltransferase (776 aa).

5-methyltetrahydropteroyltri-L-glutamate-binding positions include 13-16 (RELK) and Lys-127. Residues 450–452 (IGS) and Glu-503 contribute to the L-homocysteine site. Residues 450–452 (IGS) and Glu-503 contribute to the L-methionine site. Trp-580 is a binding site for 5-methyltetrahydropteroyltri-L-glutamate. An L-homocysteine-binding site is contributed by Asp-618. Asp-618 serves as a coordination point for L-methionine. Glu-624 lines the 5-methyltetrahydropteroyltri-L-glutamate pocket. His-660, Cys-662, and Glu-684 together coordinate Zn(2+). Catalysis depends on His-713, which acts as the Proton donor. Cys-745 contacts Zn(2+).

The protein belongs to the vitamin-B12 independent methionine synthase family. Requires Zn(2+) as cofactor.

The enzyme catalyses 5-methyltetrahydropteroyltri-L-glutamate + L-homocysteine = tetrahydropteroyltri-L-glutamate + L-methionine. It participates in amino-acid biosynthesis; L-methionine biosynthesis via de novo pathway; L-methionine from L-homocysteine (MetE route): step 1/1. Its function is as follows. Catalyzes the transfer of a methyl group from 5-methyltetrahydrofolate to homocysteine resulting in methionine formation. The chain is 5-methyltetrahydropteroyltriglutamate--homocysteine methyltransferase from Mesorhizobium japonicum (strain LMG 29417 / CECT 9101 / MAFF 303099) (Mesorhizobium loti (strain MAFF 303099)).